Here is a 513-residue protein sequence, read N- to C-terminus: Cytochrome P450 4p1 (513 aa).

Positions 320 and 459 each coordinate heme.

The protein belongs to the cytochrome P450 family. The cofactor is heme.

The protein resides in the endoplasmic reticulum membrane. It localises to the microsome membrane. Its function is as follows. May be involved in the metabolism of insect hormones and in the breakdown of synthetic insecticides. The sequence is that of Cytochrome P450 4p1 (Cyp4p1) from Drosophila melanogaster (Fruit fly).